The chain runs to 97 residues: Signal recognition particle 19 kDa protein (97 aa).

It belongs to the SRP19 family. In terms of assembly, part of the signal recognition particle protein translocation system, which is composed of SRP and FtsY. Archaeal SRP consists of a 7S RNA molecule of 300 nucleotides and two protein subunits: SRP54 and SRP19.

Its subcellular location is the cytoplasm. Its function is as follows. Involved in targeting and insertion of nascent membrane proteins into the cytoplasmic membrane. Binds directly to 7S RNA and mediates binding of the 54 kDa subunit of the SRP. This chain is Signal recognition particle 19 kDa protein, found in Methanocella arvoryzae (strain DSM 22066 / NBRC 105507 / MRE50).